We begin with the raw amino-acid sequence, 125 residues long: Apoptosis inhibitor Rv3655c (125 aa).

The first 33 residues, 1–33 (MEAALAIATLVLVLVLCLAGVTAVSMQVRCIDA), serve as a signal peptide directing secretion.

As to quaternary structure, interacts with human E3 ubiquitin-protein ligase RNF213.

The protein localises to the secreted. It is found in the host cytoplasm. Effector protein that participates in the suppression of macrophage apoptosis by blocking the extrinsic pathway. Interferes with caspase-8 activation and binds to the host E3 ubiquitin-protein ligase RNF213, whose fusion partners have anti-apoptotic function. This is Apoptosis inhibitor Rv3655c from Mycobacterium tuberculosis (strain ATCC 25618 / H37Rv).